Here is a 162-residue protein sequence, read N- to C-terminus: MNLRIGHGYDVHKFGDSGPITICGVKIDYEQGLLAHSDGDVALHALCDALLGALALGDIGGHFPDTDAQFKGADSRALLRHVMTLVNEHGYEIGNLDLTIVAQAPKMAPHIQAMRENIRQDVNAQLNQVNVKATTTEKLGFAGRKEGIACYAVVLLNKSIAA.

2 residues coordinate a divalent metal cation: Asp10 and His12. 4-CDP-2-C-methyl-D-erythritol 2-phosphate is bound by residues 10 to 12 (DVH) and 36 to 37 (HS). A divalent metal cation is bound at residue His44. Residues 58-60 (DIG), 63-67 (FPDTD), 102-108 (AQAPKMA), 134-137 (TTTE), Phe141, and Arg144 contribute to the 4-CDP-2-C-methyl-D-erythritol 2-phosphate site.

It belongs to the IspF family. In terms of assembly, homotrimer. It depends on a divalent metal cation as a cofactor.

The enzyme catalyses 4-CDP-2-C-methyl-D-erythritol 2-phosphate = 2-C-methyl-D-erythritol 2,4-cyclic diphosphate + CMP. It functions in the pathway isoprenoid biosynthesis; isopentenyl diphosphate biosynthesis via DXP pathway; isopentenyl diphosphate from 1-deoxy-D-xylulose 5-phosphate: step 4/6. Functionally, involved in the biosynthesis of isopentenyl diphosphate (IPP) and dimethylallyl diphosphate (DMAPP), two major building blocks of isoprenoid compounds. Catalyzes the conversion of 4-diphosphocytidyl-2-C-methyl-D-erythritol 2-phosphate (CDP-ME2P) to 2-C-methyl-D-erythritol 2,4-cyclodiphosphate (ME-CPP) with a corresponding release of cytidine 5-monophosphate (CMP). This Pseudoalteromonas atlantica (strain T6c / ATCC BAA-1087) protein is 2-C-methyl-D-erythritol 2,4-cyclodiphosphate synthase.